Here is a 512-residue protein sequence, read N- to C-terminus: MEKLSHGLVTSRNMIRYKSSQLPERVLQFGEGNFLRGFIDWMIQQMNKQNVFNGRVVAIQPTPHGKVVPKLQEQDSLYTVWLRGIADGETVDHHEVITSISRGLNPYTNWQDVLEVAASPDISVVFSNTTEAGLTYLEEGYDKEKAPLSFPGKLAACLWHRYETLGWGEGSGLVIIPCELVEQNGKVLKELVCRYAKAWNFPQEFFTWLERENEFCHTLVDRIVPGFPSDTADECFERLGYEDILLTVAEPYHLFIIEGSERVRKLLPFNEAGLHVRWNHLEKHRNMKVRVLNGTHTFMFALSYLSGVDTVGEAMADEQLCSFIRKGLFEEIIPCVDAPEQEVTAFAETVLERFENPFLQHRLTDIGLNAVNKFRTRLMPTFNDYVAQTGEAPTYLLFSLAALINYYRGVEEDGPFLIGRRREDSYLIRDDLEVIEAFKVGWQQVNTGKLSLAQLCEDLLSKRELWGVDLSMERKVVDKVAESLQIIVEKGMRQAISGVLNQIGGNNHVHKQ.

26–37 (VLQFGEGNFLRG) is an NAD(+) binding site.

It belongs to the mannitol dehydrogenase family. UxaB subfamily.

The enzyme catalyses D-altronate + NAD(+) = keto-D-tagaturonate + NADH + H(+). Its pathway is carbohydrate metabolism; pentose and glucuronate interconversion. In Halalkalibacterium halodurans (strain ATCC BAA-125 / DSM 18197 / FERM 7344 / JCM 9153 / C-125) (Bacillus halodurans), this protein is Altronate oxidoreductase.